We begin with the raw amino-acid sequence, 418 residues long: S-adenosylmethionine synthase (418 aa).

H16 is an ATP binding site. Residue D18 coordinates Mg(2+). E44 contributes to the K(+) binding site. 2 residues coordinate L-methionine: E57 and Q100. The flexible loop stretch occupies residues Q100 to K110. Residues D175 to K177, K251 to F252, D260, R266 to K267, A283, and K287 contribute to the ATP site. D260 contributes to the L-methionine binding site. L-methionine is bound at residue K291.

The protein belongs to the AdoMet synthase family. In terms of assembly, homotetramer; dimer of dimers. Mg(2+) is required as a cofactor. Requires K(+) as cofactor.

The protein resides in the cytoplasm. It carries out the reaction L-methionine + ATP + H2O = S-adenosyl-L-methionine + phosphate + diphosphate. It participates in amino-acid biosynthesis; S-adenosyl-L-methionine biosynthesis; S-adenosyl-L-methionine from L-methionine: step 1/1. In terms of biological role, catalyzes the formation of S-adenosylmethionine (AdoMet) from methionine and ATP. The overall synthetic reaction is composed of two sequential steps, AdoMet formation and the subsequent tripolyphosphate hydrolysis which occurs prior to release of AdoMet from the enzyme. The chain is S-adenosylmethionine synthase from Gloeothece citriformis (strain PCC 7424) (Cyanothece sp. (strain PCC 7424)).